We begin with the raw amino-acid sequence, 328 residues long: MDMDALTTLPIKKHTALLNRFPETRFVTQLAKKRASWIVFGHYLTPAQFEDMDFFTNRFNAILDMWKVGRYEVALMDGELTSEHETILKALELDYARIQDVPDLTKPGLIVLDMDSTAIQIECIDEIAKLAGVGEEVAEVTERAMQGELDFEQSLRLRVSKLKDAPEQILSQVRETLPLMPELPELVATLHAFGWKVAIASGGFTYFSDYLKEQLSLDYAQSNTLEIVSGKLTGQVLGEVVSAQTKADILLTLAQQYDVEIHNTVAVGDGANDLVMMAAAGLGVAYHAKPKVEAKAQTAVRFAGLGGVVCILSAALVAQQKLSWKSKP.

The Nucleophile role is filled by aspartate 113. Mg(2+) contacts are provided by aspartate 113 and aspartate 115. Aspartate 115 (proton donor) is an active-site residue. Residues glutamate 122, arginine 158, 201–202 (SG), and lysine 246 each bind substrate. A Mg(2+)-binding site is contributed by aspartate 269. A substrate-binding site is contributed by asparagine 272.

The protein belongs to the HAD-like hydrolase superfamily. SerB family. Requires Mg(2+) as cofactor.

The catalysed reaction is O-phospho-L-serine + H2O = L-serine + phosphate. It carries out the reaction O-phospho-D-serine + H2O = D-serine + phosphate. It participates in amino-acid biosynthesis; L-serine biosynthesis; L-serine from 3-phospho-D-glycerate: step 3/3. This Vibrio cholerae serotype O1 (strain ATCC 39315 / El Tor Inaba N16961) protein is Phosphoserine phosphatase.